The following is a 496-amino-acid chain: 1-aminocyclopropane-1-carboxylate synthase 2 (496 aa).

Substrate is bound by residues E55 and Y93. K279 carries the N6-(pyridoxal phosphate)lysine modification. 3 positions are modified to phosphoserine: S483, S488, and S491.

The protein belongs to the class-I pyridoxal-phosphate-dependent aminotransferase family. In terms of assembly, homodimer and heterodimer. In vivo, the relevance of heterodimerization with other ACS enzymes is however unsure. Interacts with GRF3. Pyridoxal 5'-phosphate serves as cofactor. Phosphorylated on serine residue by MAP kinase (MPK6). In terms of processing, may be processed at its C-terminus. In terms of tissue distribution, high in developing leaves and in flowers. Expressed in roots and siliques.

It catalyses the reaction S-adenosyl-L-methionine = 1-aminocyclopropane-1-carboxylate + S-methyl-5'-thioadenosine + H(+). Its pathway is alkene biosynthesis; ethylene biosynthesis via S-adenosyl-L-methionine; ethylene from S-adenosyl-L-methionine: step 1/2. In terms of biological role, 1-aminocyclopropane-1-carboxylate synthase (ACS) enzymes catalyze the conversion of S-adenosyl-L-methionine (SAM) into 1-aminocyclopropane-1-carboxylate (ACC), a direct precursor of ethylene. The polypeptide is 1-aminocyclopropane-1-carboxylate synthase 2 (ACS2) (Arabidopsis thaliana (Mouse-ear cress)).